We begin with the raw amino-acid sequence, 612 residues long: Mineralocorticoid receptor (612 aa).

The modulating stretch occupies residues 1–228 (GNEIADSTVS…STGPSRPSKV (228 aa)). Positions 229, 232, 246, 249, 269, 275, 285, and 288 each coordinate Zn(2+). 2 consecutive NR C4-type zinc fingers follow at residues 229–249 (CLVCGDEASGCHYGVVTCGSC) and 269–293 (CAGRNDCIIDKIRRKNCPACRLQKC). Residues 229–298 (CLVCGDEASG…RLQKCLQAGM (70 aa)) constitute a DNA-binding region (nuclear receptor). The interval 299–349 (NLGARKSKKLGKLKGVHEEHPQQPLQQTPTASPKEDTTLTSSSKEPSANSN) is hinge. Residues 310-348 (KLKGVHEEHPQQPLQQTPTASPKEDTTLTSSSKEPSANS) form a disordered region. Residues 339-348 (SSSKEPSANS) show a composition bias toward low complexity. An NR LBD domain is found at 350 to 592 (SLVPLISAVS…EFPAMLVEII (243 aa)). Asn-398 and Gln-404 together coordinate 21-hydroxyprogesterone. Aldosterone is bound by residues Asn-398 and Gln-404. Progesterone is bound by residues Asn-398 and Gln-404. The interval 410-413 (KWAK) is important for coactivator binding. Residues Arg-445 and Thr-573 each coordinate 21-hydroxyprogesterone. Residues Arg-445 and Thr-573 each contribute to the aldosterone site. Positions 445 and 573 each coordinate progesterone.

This sequence belongs to the nuclear hormone receptor family. NR3 subfamily.

The protein localises to the cytoplasm. It localises to the nucleus. Its function is as follows. Receptor for both mineralocorticoids (MC) such as aldosterone and glucocorticoids (GC) such as corticosterone or cortisol. Binds to mineralocorticoid response elements (MRE) and transactivates target genes. The effect of MC is to increase ion and water transport and thus raise extracellular fluid volume and blood pressure and lower potassium levels. The polypeptide is Mineralocorticoid receptor (nr3c2) (Xenopus laevis (African clawed frog)).